We begin with the raw amino-acid sequence, 137 residues long: Glycine cleavage system H protein (137 aa).

The Lipoyl-binding domain occupies 36–118 (PAIIGITEYA…YGEGWLLKVE (83 aa)). Residue K77 is modified to N6-lipoyllysine.

It belongs to the GcvH family. The glycine cleavage system is composed of four proteins: P, T, L and H. Requires (R)-lipoate as cofactor.

Functionally, the glycine cleavage system catalyzes the degradation of glycine. The H protein shuttles the methylamine group of glycine from the P protein to the T protein. In Bifidobacterium longum (strain NCC 2705), this protein is Glycine cleavage system H protein.